The chain runs to 268 residues: MTMTTNIFNAIILGIVEGITEFFPISSSGHLLIFTNILEMKNNEIKILNTIIQTGAALSILLHFKEKFVIFLEQIFICKQITKKNDLIYHHIILGNIPIIFIGLCIYQYIKYLSNFYSIIYALIFGTILLILTEISKTKISSNKNIETPQILIIGIFQCLALWPGFSRSCATISAGILSGLKQSKSVEFSFILSVPIFFGASVLDVINNFYDISINNIPMLFSGFLSAFITSNIVIKRCLNTMKNCSLIPFIIYRSILSIIIYLFFMH.

7 consecutive transmembrane segments (helical) span residues 7–27 (IFNA…PISS), 87–107 (LIYH…LCIY), 116–136 (FYSI…TEIS), 146–166 (IETP…WPGF), 187–207 (VEFS…LDVI), 210–230 (FYDI…SAFI), and 247–267 (SLIP…LFFM).

The protein belongs to the UppP family.

It localises to the cell membrane. The catalysed reaction is di-trans,octa-cis-undecaprenyl diphosphate + H2O = di-trans,octa-cis-undecaprenyl phosphate + phosphate + H(+). In terms of biological role, catalyzes the dephosphorylation of undecaprenyl diphosphate (UPP). Confers resistance to bacitracin. This Buchnera aphidicola subsp. Baizongia pistaciae (strain Bp) protein is Undecaprenyl-diphosphatase.